The primary structure comprises 308 residues: tRNA dimethylallyltransferase (308 aa).

11 to 18 (GSTATGKS) lines the ATP pocket. Residue 13–18 (TATGKS) coordinates substrate. An interaction with substrate tRNA region spans residues 36–39 (DSVQ).

This sequence belongs to the IPP transferase family. As to quaternary structure, monomer. Requires Mg(2+) as cofactor.

It carries out the reaction adenosine(37) in tRNA + dimethylallyl diphosphate = N(6)-dimethylallyladenosine(37) in tRNA + diphosphate. Functionally, catalyzes the transfer of a dimethylallyl group onto the adenine at position 37 in tRNAs that read codons beginning with uridine, leading to the formation of N6-(dimethylallyl)adenosine (i(6)A). In Bdellovibrio bacteriovorus (strain ATCC 15356 / DSM 50701 / NCIMB 9529 / HD100), this protein is tRNA dimethylallyltransferase.